We begin with the raw amino-acid sequence, 626 residues long: Chaperone protein DnaK (626 aa).

Thr175 is modified (phosphothreonine; by autocatalysis). Positions 586-606 (GAEGAAAGADGAGASAGSASG) are enriched in low complexity. The segment at 586–626 (GAEGAAAGADGAGASAGSASGSDDDTVEAEVVDDDDDKDNK) is disordered. Acidic residues predominate over residues 607–626 (SDDDTVEAEVVDDDDDKDNK).

The protein belongs to the heat shock protein 70 family.

In terms of biological role, acts as a chaperone. The sequence is that of Chaperone protein DnaK from Bifidobacterium longum (strain DJO10A).